The primary structure comprises 803 residues: Na(+)/H(+) antiporter subunit A1 (803 aa).

19 helical membrane passes run 1-21, 30-50, 79-99, 117-137, 166-186, 208-228, 265-285, 300-320, 337-357, 377-397, 427-447, 472-492, 522-542, 591-611, 621-641, 646-666, 671-691, 707-727, and 764-784; these read MSLLHIAVILPLIFALIIPIL, LGWFVLPIPVVLFIYFLSLIS, LSILFSLLITGIGSLVVLYSI, LFMGAMLGVVLSDNLIILYLF, LIITVFGGLSLLGGFILISLA, FIFAMVLIMLGAFTKSAQVPF, LFAISQGWIWTITLVGLITLF, ILAFSTVSQLGMIMSMLGIGA, FTAAVFHLVNHATFKGALFMI, LTIMPISFTITVITALSMAGI, LGIVFPILAIVGSIFTFVYSI, ILMLLSPIILAVLVVVFGLFP, GITPAFISTLIIWILGILLLL, LVIIFGMLIVVTIVTLLSVPF, IHIYEIAILILLIIAAFMVVI, LFSVIMLGVVGYSVSVLFVFF, LALTQFVVESISTALFLLCFY, LTNALISIGVGLVVIILGLIA, and MDTLFESSVLGIAGLGVYTMI.

This sequence belongs to the CPA3 antiporters (TC 2.A.63) subunit A family. May form a heterooligomeric complex that consists of seven subunits: mnhA1, mnhB1, mnhC1, mnhD1, mnhE1, mnhF1 and mnhG1.

Its subcellular location is the cell membrane. Its function is as follows. Mnh complex is a Na(+)/H(+) antiporter involved in Na(+) excretion. This is Na(+)/H(+) antiporter subunit A1 (mnhA1) from Staphylococcus haemolyticus (strain JCSC1435).